A 291-amino-acid chain; its full sequence is Sulfotransferase 1A1 (291 aa).

44 to 49 (KSGTTW) is a binding site for 3'-phosphoadenylyl sulfate. 102 to 104 (KTH) is a substrate binding site. The active-site Proton acceptor is His104. 3'-phosphoadenylyl sulfate-binding positions include Arg126, Ser134, Tyr189, 223–228 (TSFKKM), and 251–255 (FMRKG). Ser134 is subject to Phosphoserine.

Belongs to the sulfotransferase 1 family. In terms of assembly, homodimer. The N-terminus is blocked. As to expression, liver, kidney, heart and colon.

The protein localises to the cytoplasm. It catalyses the reaction a phenol + 3'-phosphoadenylyl sulfate = an aryl sulfate + adenosine 3',5'-bisphosphate + H(+). It carries out the reaction 17beta-estradiol + 3'-phosphoadenylyl sulfate = 17beta-estradiol 3-sulfate + adenosine 3',5'-bisphosphate + H(+). The catalysed reaction is 4-ethylphenol + 3'-phosphoadenylyl sulfate = 4-ethylphenyl sulfate + adenosine 3',5'-bisphosphate + H(+). The enzyme catalyses 4-nitrophenol + 3'-phosphoadenylyl sulfate = 4-nitrophenyl sulfate + adenosine 3',5'-bisphosphate. It catalyses the reaction dopamine + 3'-phosphoadenylyl sulfate = dopamine 3-O-sulfate + adenosine 3',5'-bisphosphate + H(+). It carries out the reaction dopamine + 3'-phosphoadenylyl sulfate = dopamine 4-O-sulfate + adenosine 3',5'-bisphosphate + H(+). The catalysed reaction is 3,3',5-triiodo-L-thyronine + 3'-phosphoadenylyl sulfate = 3,3',5-triiodo-L-thyronine sulfate + adenosine 3',5'-bisphosphate + H(+). The enzyme catalyses 3,3',5'-triiodo-L-thyronine + 3'-phosphoadenylyl sulfate = 3,3',5'-triiodo-L-thyronine sulfate + adenosine 3',5'-bisphosphate + H(+). It catalyses the reaction 3,3'-diiodo-L-thyronine + 3'-phosphoadenylyl sulfate = 3,3'-diiodo-L-thyronine sulfate + adenosine 3',5'-bisphosphate + H(+). It carries out the reaction L-thyroxine + 3'-phosphoadenylyl sulfate = L-thyroxine sulfate + adenosine 3',5'-bisphosphate + H(+). In terms of biological role, sulfotransferase that utilizes 3'-phospho-5'-adenylyl sulfate (PAPS) as sulfonate donor to catalyze the sulfate conjugation of a wide variety of acceptor molecules bearing a hydroxyl or an amine group. Sulfonation increases the water solubility of most compounds, and therefore their renal excretion, but it can also result in bioactivation to form active metabolites. Displays broad substrate specificity for small phenolic compounds. Plays an important roles in the sulfonation of endogenous molecules such as steroid hormones. Mediates the sulfate conjugation of a variety of xenobiotics, including the drugs acetaminophen and minoxidil. Mediates also the metabolic activation of carcinogenic N-hydroxyarylamines leading to highly reactive intermediates capable of forming DNA adducts, potentially resulting in mutagenesis. May play a role in gut microbiota-host metabolic interaction. O-sulfonates 4-ethylphenol (4-EP), a dietary tyrosine-derived metabolite produced by gut bacteria. The product 4-EPS crosses the blood-brain barrier and may negatively regulate oligodendrocyte maturation and myelination, affecting the functional connectivity of different brain regions associated with the limbic system. Catalyzes the sulfate conjugation of dopamine. Catalyzes the sulfation of T4 (L-thyroxine/3,5,3',5'-tetraiodothyronine), T3 (3,5,3'-triiodothyronine), rT3 (3,3',5'-triiodothyronine) and 3,3'-T2 (3,3'-diiodothyronine), with a substrate preference of 3,3'-T2 &gt; rT3 &gt; T3 &gt; T4. This Rattus norvegicus (Rat) protein is Sulfotransferase 1A1 (Sult1a1).